The primary structure comprises 330 residues: Lipoyl synthase (330 aa).

[4Fe-4S] cluster-binding residues include Cys-55, Cys-60, Cys-66, Cys-81, Cys-85, Cys-88, and Ser-292. The 215-residue stretch at 67-281 (WEDREATFLI…AEEAREIGFV (215 aa)) folds into the Radical SAM core domain.

Belongs to the radical SAM superfamily. Lipoyl synthase family. [4Fe-4S] cluster serves as cofactor.

Its subcellular location is the cytoplasm. It carries out the reaction [[Fe-S] cluster scaffold protein carrying a second [4Fe-4S](2+) cluster] + N(6)-octanoyl-L-lysyl-[protein] + 2 oxidized [2Fe-2S]-[ferredoxin] + 2 S-adenosyl-L-methionine + 4 H(+) = [[Fe-S] cluster scaffold protein] + N(6)-[(R)-dihydrolipoyl]-L-lysyl-[protein] + 4 Fe(3+) + 2 hydrogen sulfide + 2 5'-deoxyadenosine + 2 L-methionine + 2 reduced [2Fe-2S]-[ferredoxin]. The protein operates within protein modification; protein lipoylation via endogenous pathway; protein N(6)-(lipoyl)lysine from octanoyl-[acyl-carrier-protein]: step 2/2. In terms of biological role, catalyzes the radical-mediated insertion of two sulfur atoms into the C-6 and C-8 positions of the octanoyl moiety bound to the lipoyl domains of lipoate-dependent enzymes, thereby converting the octanoylated domains into lipoylated derivatives. This chain is Lipoyl synthase, found in Cutibacterium acnes (strain DSM 16379 / KPA171202) (Propionibacterium acnes).